Here is a 240-residue protein sequence, read N- to C-terminus: Guanine nucleotide exchange factor sopE2 (240 aa).

Residues 78–240 (LTSKTVKDFM…IANKYLQNAS (163 aa)) form a GEF catalytic domain region.

The protein belongs to the GEF (guanine exchange factor) SopE family.

It is found in the secreted. Its function is as follows. Activator for CDC42 by directly engaging this Rho GTPase and acting as potent guanine nucleotide exchange factor (GEF). This activation results in actin cytoskeleton rearrangements and stimulates membrane ruffling, promoting bacterial entry into non-phagocytic cells. Chaperone InvB is required for secretion, translocation and stabilization of intracellular levels of sopE2. In Salmonella paratyphi A (strain ATCC 9150 / SARB42), this protein is Guanine nucleotide exchange factor sopE2 (sopE2).